The sequence spans 248 residues: Chitin deacetylase (248 aa).

The first 26 residues, 1–26, serve as a signal peptide directing secretion; sequence MHFSTLFGAAATAALAGSTNASPLAR. 2 cysteine pairs are disulfide-bonded: Cys-38–Cys-237 and Cys-148–Cys-152. A NodB homology domain is found at 42 to 232; it reads GLVALTYDDG…TLKSKGYRAV (191 aa). The active-site Proton acceptor is Asp-49. Asp-49 contacts acetate. Positions 50, 104, and 108 each coordinate Co(2+). Tyr-145 contacts acetate. Catalysis depends on His-206, which acts as the Proton donor.

This sequence belongs to the polysaccharide deacetylase family. As to quaternary structure, monomer. Co(2+) serves as cofactor. In terms of processing, N-glycosylated.

It is found in the secreted. It carries out the reaction [(1-&gt;4)-N-acetyl-beta-D-glucosaminyl](n) + n H2O = chitosan + n acetate. Hydrolyzes the N-acetamido groups of N-acetyl-D-glucosamine polymers in chitin to form chitosan and acetate. May play a role in evasion of the host immune response; plant chitinases liberate chitin molecules from the fungal cell wall which act as elicitors of the plant immune response, deacetylation of the liberated chitin neutralizes elicitor activity. The chain is Chitin deacetylase from Colletotrichum lindemuthianum (Bean anthracnose fungus).